The following is a 351-amino-acid chain: Large ribosomal subunit protein uL3 (351 aa).

Disordered stretches follow at residues 1 to 31 and 246 to 271; these read MGHRKLASPRRGSAGLRPRKRSSELLPTPRT and KGSRKIGTRGPSLGTPSYTPQPGQLG.

This sequence belongs to the universal ribosomal protein uL3 family. As to quaternary structure, part of the 50S ribosomal subunit. Forms a cluster with proteins L14 and L24e.

In terms of biological role, one of the primary rRNA binding proteins, it binds directly near the 3'-end of the 23S rRNA, where it nucleates assembly of the 50S subunit. This chain is Large ribosomal subunit protein uL3, found in Saccharolobus islandicus (strain M.14.25 / Kamchatka #1) (Sulfolobus islandicus).